A 358-amino-acid chain; its full sequence is Myb family transcription factor IPN2 (358 aa).

The tract at residues 1–20 (MERMFPPKKPSTMNSHDRPM) is disordered. The region spanning 32–92 (TDPKPRLRWT…HLQKFRLGKQ (61 aa)) is the HTH myb-type domain. A DNA-binding region (H-T-H motif) is located at residues 63-88 (PKTIMRVMGVKGLTLYHLKSHLQKFR). Residues 127-171 (NMNEMQIEVQRRLHEQLEVQKHLQLRIEAQGKYMQSILEKAYQTL) adopt a coiled-coil conformation. The LHEQLE signature appears at 139-144 (LHEQLE). The tract at residues 310-358 (IYDSKPEEKKFDASMKLERPSPRRAPLGERMSPMITTGTMAQGRSSPFG) is disordered. Over residues 311-330 (YDSKPEEKKFDASMKLERPS) the composition is skewed to basic and acidic residues. The segment covering 343-358 (MITTGTMAQGRSSPFG) has biased composition (polar residues).

The protein belongs to the MYB-CC family. As to quaternary structure, interacts with NSP2. Expressed in leaves, stems, nodules and roots.

Its subcellular location is the nucleus. Functionally, transcriptional regulator required for Nod-factor-induced gene expression. Transcription activator involved in the induction of NIN and ENOD40 genes, which are required for rhizobial infection and early nodule development. Possesses strong transactivation activity in vitro. Does not seem to contribute to the early steps of the arbuscular mycorrhizal fungus infection and colonization processes in roots. In Lotus japonicus (Lotus corniculatus var. japonicus), this protein is Myb family transcription factor IPN2.